A 615-amino-acid polypeptide reads, in one-letter code: Delta-like protein B (615 aa).

A signal peptide spans 1-20 (MAHLSLYCLLSVSLLQLVAS). Residues 21-522 (SGVFELKVHS…VGQTSPSAVA (502 aa)) lie on the Extracellular side of the membrane. Positions 159 to 203 (VFCDEFYFGEACSDYCRPRDDTLGHYTCDENGNKECLVGWQGDYC) constitute a DSL domain. Intrachain disulfides connect C161-C170, C174-C186, C194-C203, C208-C219, C212-C225, C227-C236, C245-C250, C258-C267, C274-C286, C280-C296, C298-C307, C314-C325, C319-C334, C336-C345, C352-C363, C357-C373, C375-C384, C391-C402, C396-C411, C413-C422, C429-C440, C434-C449, C451-C460, C467-C478, C472-C487, and C489-C498. EGF-like domains lie at 204–237 (SDPI…PSCS), 241–268 (HYPG…LFCN), and 270–308 (DLNY…TNCE). Positions 310-346 (EINECDCNPCKNGGSCNDLENDYSCTCPQGFYGKNCE) constitute an EGF-like 4; calcium-binding domain. EGF-like domains are found at residues 348–385 (IAMT…SNCE) and 387–423 (RLDR…SRCE). One can recognise an EGF-like 7; calcium-binding domain in the interval 425–461 (NIDDCARYPCQNAGTCQDGINDYTCTCTLGFTGKNCS). N459 is a glycosylation site (N-linked (GlcNAc...) asparagine). Positions 463-499 (RADACLTNPCLHGGTCFTHFSGPVCQCVPGFMGSTCE) constitute an EGF-like 8 domain. The chain crosses the membrane as a helical span at residues 523–543 (VSCVLGVLAVFLGVCVGLVVL). Residues 544–615 (RRRRHRLRRQ…FLWSAGGGLR (72 aa)) are Cytoplasmic-facing.

Ubiquitinated by mib, leading to its endocytosis and subsequent degradation.

Its subcellular location is the membrane. Functionally, acts as a ligand for Notch receptors and is involved in primary neurogenesis. Can activate Notch receptors, thereby playing a key role in lateral inhibition, a process that prevents the immediate neighbors of each nascent neural cell from simultaneously embarking on neural differentiation. The chain is Delta-like protein B (dlb) from Danio rerio (Zebrafish).